The following is a 783-amino-acid chain: Protein DWD HYPERSENSITIVE TO UV-B 1 (783 aa).

2 WD repeats span residues 145–198 (GEFT…LKLP) and 212–256 (SDSS…DPSL). The Nuclear localization signal motif lies at 382-389 (RKKESVVR). 6 WD repeats span residues 439 to 480 (DNSR…IFRY), 485 to 525 (GSQS…STVT), 538 to 577 (DEFD…RLQV), 581 to 621 (MHQE…SRPC), 625 to 664 (SSTK…LHLN), and 666 to 710 (EIVP…RRLR).

As to quaternary structure, interacts directly with DDB1A. Binds to COP1 and RUP1.

The protein resides in the nucleus. May act as a substrate receptor of a CUL4-RING E3 ubiquitin-protein ligase (CRL4) complex involved in the negative regulation of cellular responses to ultraviolet-B (UV-B) illumination, likely in coordination with RUP1. Interacts with COP1 and probably prevents the formation of active UVR8-COP1 complex, thus avoiding UVR8-COP1-mediated positive regulation of UV-B responses. In Arabidopsis thaliana (Mouse-ear cress), this protein is Protein DWD HYPERSENSITIVE TO UV-B 1.